We begin with the raw amino-acid sequence, 419 residues long: MLGIITFIIIFGILVIVHEFGHFYFAKKSGILVREFAIGMGPKIFSHVDQGGTLYTLRMLPLGGYVRMAGWGDDKTEIKTGTPASLTLNEQGFVKRINLSQSKLDPTSLPMHVTGYDLEDQLSITGLVLEETKTYKVAHDATIVEEDGTEIRIAPLDVQYQNASIGGRLITNFAGPMNNFILGIVVFILLVFLQGGMPDFSSNHVRVQENGAAAKAGLRDNDQIVAINGYKVTSWNDLTEAVDLATRDLGPSQTIKVTYKSHQRLKTVAVKPQKHAKTYTIGVKASLKTGFKDKLLGGLELAWSRAFTILNALKGLITGFSLNKLGGPVAMYDMSNQAAQNGLESVLSLMAMLSINLGIFNLIPIPALDGGKILMNIIEAIRRKPIKQETEAYITLAGVAIMVVLMIAVTWNDIMRVFF.

His-18 serves as a coordination point for Zn(2+). The active site involves Glu-19. Position 22 (His-22) interacts with Zn(2+). The next 4 helical transmembrane spans lie at 169–191 (LITN…ILLV), 301–323 (LAWS…FSLN), 343–365 (LESV…LIPI), and 392–411 (AYIT…AVTW). One can recognise a PDZ domain in the interval 175–274 (GPMNNFILGI…LKTVAVKPQK (100 aa)).

This sequence belongs to the peptidase M50B family. It depends on Zn(2+) as a cofactor.

The protein localises to the cell membrane. This Streptococcus pyogenes serotype M1 protein is Putative zinc metalloprotease SPy_1963/M5005_Spy1674.